The primary structure comprises 328 residues: Purple acid phosphatase 7 (328 aa).

The signal sequence occupies residues 1-24 (MKMHVCFSVILMFLSIFFINGALS). Asp-48 provides a ligand contact to Fe cation. Asn-56 carries an N-linked (GlcNAc...) asparagine glycan. Residues Asp-81 and Tyr-84 each contribute to the Fe cation site. Asp-81 is a binding site for Zn(2+). 2 residues coordinate Zn(2+): Asn-119 and His-213. His-222 acts as the Proton donor in catalysis. Position 248 (His-248) interacts with Zn(2+). 248-250 (HDH) is a substrate binding site. Residue His-250 participates in Fe cation binding.

The protein belongs to the metallophosphoesterase superfamily. Purple acid phosphatase family. As to quaternary structure, homodimer. Requires Fe cation as cofactor. It depends on Zn(2+) as a cofactor. Expressed in roots, stems, leaves, flowers and siliques.

The protein localises to the secreted. It carries out the reaction a phosphate monoester + H2O = an alcohol + phosphate. The protein is Purple acid phosphatase 7 (PAP7) of Arabidopsis thaliana (Mouse-ear cress).